The primary structure comprises 134 residues: Profilin-2 (134 aa).

Cys13 and Cys118 form a disulfide bridge. Positions 84 to 100 (AVIRGKKGSGGITIKKT) match the Involved in PIP2 interaction motif. Thr114 is modified (phosphothreonine).

Belongs to the profilin family. As to quaternary structure, occurs in many kinds of cells as a complex with monomeric actin in a 1:1 ratio. In terms of processing, phosphorylated by MAP kinases.

The protein localises to the cytoplasm. It is found in the cytoskeleton. Binds to actin and affects the structure of the cytoskeleton. At high concentrations, profilin prevents the polymerization of actin, whereas it enhances it at low concentrations. This Olea europaea (Common olive) protein is Profilin-2.